Consider the following 69-residue polypeptide: Proteinase inhibitor (69 aa).

N-acetylserine is present on Ser1. A disulfide bridge connects residues Cys4 and Cys49.

In terms of biological role, in vitro, strong inhibitor of bovine beta-trypsin, weak inhibitor of alpha-chymotrypsin, subtilisin BPN', subtilisin Carlsberg and cathepsin G. This is Proteinase inhibitor from Linum usitatissimum (Flax).